A 318-amino-acid chain; its full sequence is Very-long-chain 3-oxoacyl-CoA reductase-B (318 aa).

A helical membrane pass occupies residues 15 to 35; it reads FWYLGVVAATWWGLRAAWCLL. 54–83 serves as a coordination point for NADP(+); it reads GKWAVVTGATDGIGKAYAEELARRGMNIVL. 2 consecutive transmembrane segments (helical) span residues 187-207 and 281-301; these read GVVL…LTVY and AITG…SMGM. Position 194 (Ser-194) interacts with substrate. Catalysis depends on Tyr-207, which acts as the Proton acceptor.

It belongs to the short-chain dehydrogenases/reductases (SDR) family. 17-beta-HSD 3 subfamily.

It localises to the endoplasmic reticulum membrane. It catalyses the reaction a very-long-chain (3R)-3-hydroxyacyl-CoA + NADP(+) = a very-long-chain 3-oxoacyl-CoA + NADPH + H(+). It carries out the reaction 17beta-estradiol + NAD(+) = estrone + NADH + H(+). The catalysed reaction is 17beta-estradiol + NADP(+) = estrone + NADPH + H(+). It functions in the pathway lipid metabolism; fatty acid biosynthesis. It participates in steroid biosynthesis; estrogen biosynthesis. Catalyzes the second of the four reactions of the long-chain fatty acids elongation cycle. This endoplasmic reticulum-bound enzymatic process, allows the addition of two carbons to the chain of long- and very long-chain fatty acids/VLCFAs per cycle. This enzyme has a 3-ketoacyl-CoA reductase activity, reducing 3-ketoacyl-CoA to 3-hydroxyacyl-CoA, within each cycle of fatty acid elongation. Thereby, it may participate in the production of VLCFAs of different chain lengths that are involved in multiple biological processes as precursors of membrane lipids and lipid mediators. May also catalyze the transformation of estrone (E1) into estradiol (E2) and play a role in estrogen formation. This chain is Very-long-chain 3-oxoacyl-CoA reductase-B (hsd17b12-b), found in Xenopus laevis (African clawed frog).